A 709-amino-acid chain; its full sequence is Nucleobase-ascorbate transporter 11 (709 aa).

Disordered regions lie at residues 1–28 and 58–167; these read MDSGSGFDPDTGNNKGNGSGGGNGYGER and TGFV…SEDG. Residues 15-25 are compositionally biased toward gly residues; it reads KGNGSGGGNGY. The span at 65–74 shows a compositional bias: polar residues; that stretch reads SGETSTSTRT. 3 stretches are compositionally biased toward basic and acidic residues: residues 75–89, 108–132, and 142–151; these read KFGESSDFDLPKGRD, NRPEIEHVTGSEPVSREEEERRLNR, and EGGKINKDLE. Transmembrane regions (helical) follow at residues 196–216, 222–242, 246–266, 288–308, 310–330, 336–356, 369–389, 454–474, 532–552, 555–575, 590–610, and 642–662; these read YLSLVGSLVFIPLVIVPAMDG, ASVISTMLLLTGVTTILHCYF, LPLVQGSSFVYLAPVLVVINS, IIVGSLFQCILGFSGLMSLLL, FINPVVVAPTVAAVGLAFFSY, GTCVEISVPLILLLLIFTLYL, IYAVPLSALLIWTYAFFLTVG, IIMIFVSLVASVDSVGTYHSA, LVIGAMFLIVLSFLGKLGAIL, IPQALAASVLCFIWALTVSLG, ITIVGVSLFLGLSIPAYFQQY, and FAMNAVLSLNMVVTFLLAFIL.

It belongs to the nucleobase:cation symporter-2 (NCS2) (TC 2.A.40) family. As to expression, expressed in leaf primordia and vasculature of pedicels, rosette leaves, sepals, carpels and siliques. Expressed in the root central cylinder.

The protein resides in the membrane. The sequence is that of Nucleobase-ascorbate transporter 11 (NAT11) from Arabidopsis thaliana (Mouse-ear cress).